Reading from the N-terminus, the 197-residue chain is Probable molybdenum cofactor guanylyltransferase (197 aa).

Residues 12 to 14 (LAG), K24, D71, and D103 contribute to the GTP site. A Mg(2+)-binding site is contributed by D103.

It belongs to the MobA family. It depends on Mg(2+) as a cofactor.

Its subcellular location is the cytoplasm. It carries out the reaction Mo-molybdopterin + GTP + H(+) = Mo-molybdopterin guanine dinucleotide + diphosphate. Transfers a GMP moiety from GTP to Mo-molybdopterin (Mo-MPT) cofactor (Moco or molybdenum cofactor) to form Mo-molybdopterin guanine dinucleotide (Mo-MGD) cofactor. In Mycobacterium avium (strain 104), this protein is Probable molybdenum cofactor guanylyltransferase.